A 187-amino-acid polypeptide reads, in one-letter code: Calcium and integrin-binding family member 2 (187 aa).

EF-hand domains are found at residues 66–101 (RENP…LCES), 103–138 (PREL…LTKS), and 144–179 (EVVL…APDF). The Ca(2+) site is built by D116, N118, D120, D127, D157, D159, D161, K163, and D168.

In terms of assembly, monomer. Homodimer. Interacts with WHRN and MYO7A. Interacts with ITGA2B (via C-terminus cytoplasmic tail region); the interactions are stabilized/increased in a calcium and magnesium-dependent manner. Interacts with ITGA7 (via C-terminus cytoplasmic tail region); the interactions are stabilized/increased in a calcium and magnesium-dependent manner. Interacts with TMC1. Interacts with TMC2. In terms of tissue distribution, widely expressed.

The protein localises to the cytoplasm. The protein resides in the cell projection. It localises to the stereocilium. It is found in the photoreceptor inner segment. Its subcellular location is the cilium. The protein localises to the photoreceptor outer segment. The protein resides in the cell membrane. It localises to the sarcolemma. Its function is as follows. Calcium- and integrin-binding protein that plays a role in intracellular calcium homeostasis. Acts as an auxiliary subunit of the sensory mechanoelectrical transduction (MET) channel in hair cells. Essential for mechanoelectrical transduction (MET) currents in auditory hair cells and thereby required for hearing. Regulates the function of hair cell mechanotransduction by controlling the distribution of transmembrane channel-like proteins TMC1 and TMC2, and by regulating the function of the MET channels in hair cells. Required for the maintenance of auditory hair cell stereocilia bundle morphology and function and for hair-cell survival in the cochlea. Critical for proper photoreceptor cell maintenance and function. Plays a role in intracellular calcium homeostasis by decreasing ATP-induced calcium release. This chain is Calcium and integrin-binding family member 2 (CIB2), found in Homo sapiens (Human).